We begin with the raw amino-acid sequence, 227 residues long: Phosphoribosylformylglycinamidine synthase subunit PurQ (227 aa).

The 226-residue stretch at 2 to 227 folds into the Glutamine amidotransferase type-1 domain; sequence RWAIVRFPGA…FLGLVKEVAR (226 aa). Cys-85 functions as the Nucleophile in the catalytic mechanism. Catalysis depends on residues His-200 and Glu-202.

In terms of assembly, part of the FGAM synthase complex composed of 1 PurL, 1 PurQ and 2 PurS subunits.

Its subcellular location is the cytoplasm. It catalyses the reaction N(2)-formyl-N(1)-(5-phospho-beta-D-ribosyl)glycinamide + L-glutamine + ATP + H2O = 2-formamido-N(1)-(5-O-phospho-beta-D-ribosyl)acetamidine + L-glutamate + ADP + phosphate + H(+). The enzyme catalyses L-glutamine + H2O = L-glutamate + NH4(+). It participates in purine metabolism; IMP biosynthesis via de novo pathway; 5-amino-1-(5-phospho-D-ribosyl)imidazole from N(2)-formyl-N(1)-(5-phospho-D-ribosyl)glycinamide: step 1/2. Functionally, part of the phosphoribosylformylglycinamidine synthase complex involved in the purines biosynthetic pathway. Catalyzes the ATP-dependent conversion of formylglycinamide ribonucleotide (FGAR) and glutamine to yield formylglycinamidine ribonucleotide (FGAM) and glutamate. The FGAM synthase complex is composed of three subunits. PurQ produces an ammonia molecule by converting glutamine to glutamate. PurL transfers the ammonia molecule to FGAR to form FGAM in an ATP-dependent manner. PurS interacts with PurQ and PurL and is thought to assist in the transfer of the ammonia molecule from PurQ to PurL. This is Phosphoribosylformylglycinamidine synthase subunit PurQ from Thermus thermophilus (strain ATCC 27634 / DSM 579 / HB8).